The sequence spans 281 residues: Pseudouridine-5'-phosphate glycosidase (281 aa).

Residue Glu-9 is the Proton donor of the active site. Substrate-binding residues include Lys-69 and Val-89. Asp-118 contacts Mn(2+). 120 to 122 (SAD) provides a ligand contact to substrate. Lys-139 functions as the Nucleophile in the catalytic mechanism.

Belongs to the pseudouridine-5'-phosphate glycosidase family. Homotrimer. The cofactor is Mn(2+).

It carries out the reaction D-ribose 5-phosphate + uracil = psi-UMP + H2O. Functionally, catalyzes the reversible cleavage of pseudouridine 5'-phosphate (PsiMP) to ribose 5-phosphate and uracil. Functions biologically in the cleavage direction, as part of a pseudouridine degradation pathway. This chain is Pseudouridine-5'-phosphate glycosidase, found in Thermus thermophilus (strain ATCC BAA-163 / DSM 7039 / HB27).